We begin with the raw amino-acid sequence, 159 residues long: D-aminoacyl-tRNA deacylase (159 aa).

The short motif at G146 to P147 is the Gly-cisPro motif, important for rejection of L-amino acids element.

It belongs to the DTD family. In terms of assembly, homodimer.

It is found in the cytoplasm. The enzyme catalyses glycyl-tRNA(Ala) + H2O = tRNA(Ala) + glycine + H(+). The catalysed reaction is a D-aminoacyl-tRNA + H2O = a tRNA + a D-alpha-amino acid + H(+). In terms of biological role, an aminoacyl-tRNA editing enzyme that deacylates mischarged D-aminoacyl-tRNAs. Also deacylates mischarged glycyl-tRNA(Ala), protecting cells against glycine mischarging by AlaRS. Acts via tRNA-based rather than protein-based catalysis; rejects L-amino acids rather than detecting D-amino acids in the active site. By recycling D-aminoacyl-tRNA to D-amino acids and free tRNA molecules, this enzyme counteracts the toxicity associated with the formation of D-aminoacyl-tRNA entities in vivo and helps enforce protein L-homochirality. This is D-aminoacyl-tRNA deacylase from Bifidobacterium animalis subsp. lactis (strain AD011).